We begin with the raw amino-acid sequence, 345 residues long: Protein RecA (345 aa).

An ATP-binding site is contributed by 66–73; sequence GPESSGKT.

This sequence belongs to the RecA family.

The protein localises to the cytoplasm. Functionally, can catalyze the hydrolysis of ATP in the presence of single-stranded DNA, the ATP-dependent uptake of single-stranded DNA by duplex DNA, and the ATP-dependent hybridization of homologous single-stranded DNAs. It interacts with LexA causing its activation and leading to its autocatalytic cleavage. The protein is Protein RecA of Helicobacter hepaticus (strain ATCC 51449 / 3B1).